We begin with the raw amino-acid sequence, 224 residues long: MADS-box transcription factor 16 (224 aa).

The region spanning 1–61 (MGRGKIEIKR…GKYHEFCSPS (61 aa)) is the MADS-box domain. Residues 84–174 (YENMQRTLSH…QQELGLREEP (91 aa)) form the K-box domain.

May interact with the K-box of MADS4, MADS6 and MADS8. May form a heterodimer with MADS4. In terms of tissue distribution, expressed in lodicules, stamens and carpels.

It localises to the nucleus. Its function is as follows. Probable transcription factor involved in the development of floral organs. Required for normal development of lodicules and stamens (whorls 2 and 3). May function as a heterodimer with MADS4. The protein is MADS-box transcription factor 16 (MADS16) of Oryza sativa subsp. japonica (Rice).